We begin with the raw amino-acid sequence, 212 residues long: 3,4-dihydroxy-2-butanone 4-phosphate synthase (212 aa).

Residues 37–38 (RE), Asp-42, 150–154 (RRGHT), and Glu-174 each bind D-ribulose 5-phosphate. Position 38 (Glu-38) interacts with Mg(2+). Position 153 (His-153) interacts with Mg(2+).

Belongs to the DHBP synthase family. As to quaternary structure, homodimer. It depends on Mg(2+) as a cofactor. The cofactor is Mn(2+).

The catalysed reaction is D-ribulose 5-phosphate = (2S)-2-hydroxy-3-oxobutyl phosphate + formate + H(+). It functions in the pathway cofactor biosynthesis; riboflavin biosynthesis; 2-hydroxy-3-oxobutyl phosphate from D-ribulose 5-phosphate: step 1/1. In terms of biological role, catalyzes the conversion of D-ribulose 5-phosphate to formate and 3,4-dihydroxy-2-butanone 4-phosphate. This Shewanella halifaxensis (strain HAW-EB4) protein is 3,4-dihydroxy-2-butanone 4-phosphate synthase.